The following is a 377-amino-acid chain: L-arabinitol 4-dehydrogenase (377 aa).

Residues Cys-66, His-91, Glu-92, Cys-121, Cys-124, Cys-127, Cys-135, and Glu-176 each contribute to the Zn(2+) site. NAD(+) contacts are provided by residues Pro-203–Ile-204, Asp-224, Arg-229, Ile-296, and Gln-320–Arg-322.

It belongs to the zinc-containing alcohol dehydrogenase family. In terms of assembly, homotetramer. Zn(2+) serves as cofactor. In terms of processing, the N-terminus is blocked.

It carries out the reaction L-arabinitol + NAD(+) = L-xylulose + NADH + H(+). The protein operates within carbohydrate degradation; L-arabinose degradation via L-arabinitol; D-xylulose 5-phosphate from L-arabinose (fungal route): step 2/5. Catalyzes the NAD-dependent oxidation of L-arabinitol to L-xylulose in the fungal L-arabinose catabolic pathway. L-arabinose catabolism is important for using plant material as a carbon source. Can partially compensate for xylitol dehydrogenase in xdh1 mutants. Also oxidizes galactitol to L-xylo-3-hexulose as an alternative to the standard Leloir pathway for D-galactose metabolism. NADP cannot act as a cosubstrate. This is L-arabinitol 4-dehydrogenase (lad1) from Hypocrea jecorina (Trichoderma reesei).